The following is a 340-amino-acid chain: Probable dual-specificity RNA methyltransferase RlmN (340 aa).

Catalysis depends on E90, which acts as the Proton acceptor. A Radical SAM core domain is found at 97-325 (QVSRKTACLS…PVTRRYQRGN (229 aa)). A disulfide bond links C104 and C331. Residues C111, C115, and C118 each contribute to the [4Fe-4S] cluster site. Residues 157–158 (GE), S189, 212–214 (SLT), and N288 each bind S-adenosyl-L-methionine. The active-site S-methylcysteine intermediate is C331.

It belongs to the radical SAM superfamily. RlmN family. Requires [4Fe-4S] cluster as cofactor.

It localises to the cytoplasm. It catalyses the reaction adenosine(2503) in 23S rRNA + 2 reduced [2Fe-2S]-[ferredoxin] + 2 S-adenosyl-L-methionine = 2-methyladenosine(2503) in 23S rRNA + 5'-deoxyadenosine + L-methionine + 2 oxidized [2Fe-2S]-[ferredoxin] + S-adenosyl-L-homocysteine. The enzyme catalyses adenosine(37) in tRNA + 2 reduced [2Fe-2S]-[ferredoxin] + 2 S-adenosyl-L-methionine = 2-methyladenosine(37) in tRNA + 5'-deoxyadenosine + L-methionine + 2 oxidized [2Fe-2S]-[ferredoxin] + S-adenosyl-L-homocysteine. Its function is as follows. Specifically methylates position 2 of adenine 2503 in 23S rRNA and position 2 of adenine 37 in tRNAs. In Treponema pallidum (strain Nichols), this protein is Probable dual-specificity RNA methyltransferase RlmN.